A 207-amino-acid polypeptide reads, in one-letter code: MIQVPVKDANNQEVRSTELNESVFGREIRADLLGMAVNYQLAKRRLGTATVLGRSDVRGGGKKPYRQKGTGNARQGTIRAPQFRTGGIVFGPQQRDYSHKLNKKVRKLALQTALSVKASSEEMVVVDKLELASIKTKEMKALLSTLGAARSTFLVVKELSNEIVLSARNIPNVMVADVDGVNVYDLLRYEKLVITEEAVRSLEEKLA.

The disordered stretch occupies residues 54 to 74; it reads RSDVRGGGKKPYRQKGTGNAR.

The protein belongs to the universal ribosomal protein uL4 family. As to quaternary structure, part of the 50S ribosomal subunit.

Functionally, one of the primary rRNA binding proteins, this protein initially binds near the 5'-end of the 23S rRNA. It is important during the early stages of 50S assembly. It makes multiple contacts with different domains of the 23S rRNA in the assembled 50S subunit and ribosome. Forms part of the polypeptide exit tunnel. The protein is Large ribosomal subunit protein uL4 of Magnetococcus marinus (strain ATCC BAA-1437 / JCM 17883 / MC-1).